The following is a 369-amino-acid chain: Nuclear pore complex-interacting protein family member A2 (369 aa).

Positions 325-346 (KTPPECLLTPLPPSAPPSADDN) are disordered.

This sequence belongs to the NPIP family.

This is Nuclear pore complex-interacting protein family member A2 (NPIPA2) from Homo sapiens (Human).